We begin with the raw amino-acid sequence, 602 residues long: MLFRFLALLPFVAGAFAEYKVHDDTFKPDYVLEATLDDIKINCVSRSSIVFNGTSPGPTIYLQEEQTTWIRVYNKIPDNNVTVHWHGLSQRAAPFSDGTPLVSQWPIPAGQFFDYEIRPEIGDAGSYFYHSHVGFQIVTAFGALIVRDARKPEYKYDGDIPLLVGDNYAAEDEVIEQGLLADPFKWSGEPQAITIQGNSGNKSFYEAPDSSCMPHVVHVDPGKTYRLRFISATALSMIKLGIEDHENLTVIEADGSYTKPAKIDHVQVSPGQRYSYLMKTKTSKEVCGGDKSQYWIRYESRDRPKVISGYALLKYRCDKNQKLPKSLPETSPIELSNSTADYLEYALEGLSEKNNQAFPKLSEVTRTVVIQINQILTTGAYVNGTLNGTVAWAQNGLPWKENVQAERRQVPYLIQIYENGTTPNYTLALEHHGFDPETKAFPAKVGEVLDIVWENNNGPTGGWDYHPMHVHGYHVYDLGSGNGTYNATENEAHFENFTPVLRDTTNLYRYAVKGVPHHTAGWRAWRIRITEENIGAWMMHCHIAQHQVMGMATVWVFGDAEQIRGKFPAPPYTQGYLTYGGSAYGTEDDQPWVNEYYSDKNN.

The N-terminal stretch at 1–17 (MLFRFLALLPFVAGAFA) is a signal peptide. Plastocyanin-like domains follow at residues 38–149 (DIKI…VRDA) and 160–317 (IPLL…KYRC). 2 N-linked (GlcNAc...) asparagine glycosylation sites follow: Asn52 and Asn80. Positions 84, 86, 130, and 132 each coordinate Cu cation. N-linked (GlcNAc...) asparagine glycosylation is found at Asn201, Asn247, Asn337, Asn383, Asn387, Asn419, and Asn424. In terms of domain architecture, Plastocyanin-like 3 spans 421 to 556 (TTPNYTLALE…QVMGMATVWV (136 aa)). A Cu cation-binding site is contributed by His469. 2 N-linked (GlcNAc...) asparagine glycosylation sites follow: Asn482 and Asn486.

It belongs to the multicopper oxidase family.

Its pathway is pigment biosynthesis. In terms of biological role, multicopper oxidase; part of the gene cluster that mediates the biosynthesis of aurofusarin, a red mycelium pigment which is acting as a mycotoxin. The first step is performed by the polyketide synthase which condenses one acetyl-CoA and 6 malonyl-CoA units to form the first intermediate, the cyclic heptaketide and yellow pigment YWA1. The C2 hydroxyl group in the pyrone ring of YWA1 is probably formed during ring closure by an aldol-type cyclization reaction. The dehydratase aurZ then acts as the first tailoring enzyme in the aurofusarin biosynthetic pathway by converting YWA1 to nor-rubrofusarin. Nor-rubrofusarin is then methylated to rubrofusarin by the O-methyltransferase aurJ. Rubrofusarin is then transported across the plasma membrane by the rubrofusarin-specific pump aurT for further enzymatic processing by the extracellular complex composed of GIP1, aurF, aurO and aurS to yield aurofusarin. This is Multicopper oxidase aurL2 (aurL2) from Gibberella zeae (strain ATCC MYA-4620 / CBS 123657 / FGSC 9075 / NRRL 31084 / PH-1) (Wheat head blight fungus).